Reading from the N-terminus, the 128-residue chain is 14.7 kDa protein (128 aa).

The C4-type zinc finger occupies 65 to 94 (CFDCGAYLYDDHVCKRFTSRSNSDCLSVIH).

Its function is as follows. May act as a regulatory factor during viral transcription. This is 14.7 kDa protein from Shallot virus X (ShVX).